The chain runs to 517 residues: Enantioselective amidase (517 aa).

Catalysis depends on charge relay system residues lysine 96 and serine 173. Residue serine 197 is the Acyl-ester intermediate of the active site.

The protein belongs to the amidase family. Homooctamer.

It carries out the reaction a monocarboxylic acid amide + H2O = a monocarboxylate + NH4(+). The chain is Enantioselective amidase (amdA) from Rhodococcus rhodochrous.